Consider the following 444-residue polypeptide: Deoxyguanosinetriphosphate triphosphohydrolase-like protein (444 aa).

Residues methionine 1–glutamine 26 form a disordered region. The HD domain occupies arginine 59–alanine 250.

It belongs to the dGTPase family. Type 2 subfamily.

The polypeptide is Deoxyguanosinetriphosphate triphosphohydrolase-like protein (Shewanella woodyi (strain ATCC 51908 / MS32)).